The chain runs to 21 residues: Peptide Hact-2 (21 aa).

Disulfide bonds link Cys-1/Cys-18, Cys-5/Cys-14, and Cys-9/Cys-20.

Expressed in tentacles.

Its subcellular location is the nematocyst. It is found in the secreted. Functionally, peptide of unknown function. Does not exhibit antimicrobial activity against Escherichia coli and Staphylococcus aureus. Promotes cell proliferation of human fibroblast skin cells. Does not exhibit any effect on voltage-gated ion channels, including potassium, sodium, and calcium channels. This Heliofungia actiniformis (Mushroom coral) protein is Peptide Hact-2.